The chain runs to 554 residues: MAIQHPDIQPAVNHSVQVAIAGAGPVGLMMANYLGQMGIDVLVVEKLDKLIDYPRAIGIDDEALRTMQSVGLVDDVLPHTTPWHAMRFLTPKGRCFADIQPMTDEFGWPRRNAFIQPQVDAVMLEGVSRFPNVRCLFSRELEAFSQQDDEVTLHLKTAEGQREIVKAQWLVACDGGASFVRRTLNVPFEGKTAPNQWIVVDIANDPLSTPHIYLCCDPVRPYVSAALPHAVRRFEFMVMPGETEEQLREPQNMRKLLSKVLPNPDNVELIRQRVYTHNARLAQRFRIDRVLLAGDAAHIMPVWQGQGYNSGMRDAFNLAWKLALVIQGKARDALLDTYQQERRDHAKAMIDLSVTAGNVLAPPKRWQGTLRDGVSWLLNYLPPVKRYFLEMRFKPMPQYYGGALMREGEAKHSPVGKMFIQPKVTLENGDVTLLDNAIGANFAVIGWGCNPLWGMSDEQIQQWRALGTRFIQVVPEVQIHTAQDNHDGVLRVGDTQGRLRSWFAQHNASLVVMRPDRFVAATAIPQTLGKTLNKLASVMTLTRPDADVSVEKVA.

Residues 17–46 and 285–295 contribute to the FAD site; these read QVAI…VVEK and FRIDRVLLAGD.

The protein belongs to the PheA/TfdB FAD monooxygenase family. It depends on FAD as a cofactor.

The catalysed reaction is 3-(3-hydroxyphenyl)propanoate + NADH + O2 + H(+) = 3-(2,3-dihydroxyphenyl)propanoate + NAD(+) + H2O. It carries out the reaction (2E)-3-(3-hydroxyphenyl)prop-2-enoate + NADH + O2 + H(+) = (2E)-3-(2,3-dihydroxyphenyl)prop-2-enoate + NAD(+) + H2O. It participates in aromatic compound metabolism; 3-phenylpropanoate degradation. In terms of biological role, catalyzes the insertion of one atom of molecular oxygen into position 2 of the phenyl ring of 3-(3-hydroxyphenyl)propionate (3-HPP) and hydroxycinnamic acid (3HCI). In Escherichia coli (strain K12 / DH10B), this protein is 3-(3-hydroxy-phenyl)propionate/3-hydroxycinnamic acid hydroxylase.